A 314-amino-acid chain; its full sequence is Aspartate carbamoyltransferase catalytic subunit (314 aa).

Positions 55 and 56 each coordinate carbamoyl phosphate. Residue Lys-83 participates in L-aspartate binding. The carbamoyl phosphate site is built by Arg-105, His-139, and Gln-142. L-aspartate contacts are provided by Arg-172 and Arg-226. 2 residues coordinate carbamoyl phosphate: Gly-267 and Pro-268.

Belongs to the aspartate/ornithine carbamoyltransferase superfamily. ATCase family. Heterododecamer (2C3:3R2) of six catalytic PyrB chains organized as two trimers (C3), and six regulatory PyrI chains organized as three dimers (R2).

It catalyses the reaction carbamoyl phosphate + L-aspartate = N-carbamoyl-L-aspartate + phosphate + H(+). Its pathway is pyrimidine metabolism; UMP biosynthesis via de novo pathway; (S)-dihydroorotate from bicarbonate: step 2/3. Catalyzes the condensation of carbamoyl phosphate and aspartate to form carbamoyl aspartate and inorganic phosphate, the committed step in the de novo pyrimidine nucleotide biosynthesis pathway. The protein is Aspartate carbamoyltransferase catalytic subunit of Rhodococcus jostii (strain RHA1).